A 322-amino-acid chain; its full sequence is Cytochrome c biogenesis protein CcsA (322 aa).

The next 8 membrane-spanning stretches (helical) occupy residues 9–29, 44–64, 71–91, 97–117, 143–163, 225–245, 254–274, and 286–306; these read ILTH…LITL, GMIT…IFLG, LYES…VPYF, FLSA…TSGL, MILG…FLVI, IISI…VWAN, WDPK…YFHI, and AIVA…VNLL.

This sequence belongs to the CcmF/CycK/Ccl1/NrfE/CcsA family. In terms of assembly, may interact with Ccs1.

Its subcellular location is the plastid. The protein resides in the chloroplast thylakoid membrane. Required during biogenesis of c-type cytochromes (cytochrome c6 and cytochrome f) at the step of heme attachment. The polypeptide is Cytochrome c biogenesis protein CcsA (Manihot esculenta (Cassava)).